A 377-amino-acid chain; its full sequence is O-phospho-L-seryl-tRNA:Cys-tRNA synthase (377 aa).

Pyridoxal 5'-phosphate is bound by residues 82 to 83, N189, and 212 to 214; these read AR and SGH. K215 is modified (N6-(pyridoxal phosphate)lysine).

Belongs to the SepCysS family. As to quaternary structure, homodimer. Interacts with SepRS. It depends on pyridoxal 5'-phosphate as a cofactor.

It carries out the reaction O-phospho-L-seryl-tRNA(Cys) + hydrogen sulfide + H(+) = L-cysteinyl-tRNA(Cys) + phosphate. Functionally, converts O-phospho-L-seryl-tRNA(Cys) (Sep-tRNA(Cys)) to L-cysteinyl-tRNA(Cys) (Cys-tRNA(Cys)). The sequence is that of O-phospho-L-seryl-tRNA:Cys-tRNA synthase from Methanocaldococcus jannaschii (strain ATCC 43067 / DSM 2661 / JAL-1 / JCM 10045 / NBRC 100440) (Methanococcus jannaschii).